A 340-amino-acid chain; its full sequence is Ribonucleoside-diphosphate reductase small subunit (340 aa).

A helical membrane pass occupies residues 180–200; it reads FILMILIEGIFFAASFAAIAY.

This sequence belongs to the ribonucleoside diphosphate reductase small chain family. In terms of assembly, heterotetramer composed of a homodimer of the large subunit (R1) and a homodimer of the small subunit (R2). Larger multisubunit protein complex are also active, composed of (R1)n(R2)n. It depends on Fe cation as a cofactor.

The protein resides in the host membrane. It catalyses the reaction a 2'-deoxyribonucleoside 5'-diphosphate + [thioredoxin]-disulfide + H2O = a ribonucleoside 5'-diphosphate + [thioredoxin]-dithiol. Functionally, ribonucleoside-diphosphate reductase holoenzyme provides the precursors necessary for viral DNA synthesis. Allows virus growth in non-dividing cells, as well as reactivation from latency in infected hosts. Catalyzes the biosynthesis of deoxyribonucleotides from the corresponding ribonucleotides. This chain is Ribonucleoside-diphosphate reductase small subunit, found in Human herpesvirus 1 (strain 17) (HHV-1).